The chain runs to 1043 residues: Protein translocase subunit SecA (1043 aa).

ATP contacts are provided by residues glutamine 143, 161–165 (GEGKT), and aspartate 665. Over residues 980–1005 (ATAAPAAETTTTAKAADAARQQPPAA) the composition is skewed to low complexity. Residues 980–1043 (ATAAPAAETT…KYKHCHGRNA (64 aa)) are disordered. Positions 1008–1022 (EEQKRQPVHVEKTPG) are enriched in basic and acidic residues. Zn(2+)-binding residues include cysteine 1027, cysteine 1029, cysteine 1038, and histidine 1039. Basic residues predominate over residues 1033–1043 (KKYKHCHGRNA).

This sequence belongs to the SecA family. Monomer and homodimer. Part of the essential Sec protein translocation apparatus which comprises SecA, SecYEG and auxiliary proteins SecDF. Other proteins may also be involved. It depends on Zn(2+) as a cofactor.

The protein localises to the cell inner membrane. Its subcellular location is the cytoplasm. The catalysed reaction is ATP + H2O + cellular proteinSide 1 = ADP + phosphate + cellular proteinSide 2.. Its function is as follows. Part of the Sec protein translocase complex. Interacts with the SecYEG preprotein conducting channel. Has a central role in coupling the hydrolysis of ATP to the transfer of proteins into and across the cell membrane, serving as an ATP-driven molecular motor driving the stepwise translocation of polypeptide chains across the membrane. The chain is Protein translocase subunit SecA from Chloroherpeton thalassium (strain ATCC 35110 / GB-78).